Consider the following 420-residue polypeptide: C-methyltransferase NovU (420 aa).

It belongs to the methyltransferase superfamily.

Its pathway is antibiotic biosynthesis; novobiocin biosynthesis. In terms of biological role, C-methyltransferase that acts together with NovW to catalyze the formation of dTDP-4-keto-6-deoxy-5-C-methyl-L-lyxo-hexose from dTDP-4-keto-6-deoxy-D-glucose in the novobiocin biosynthesis pathway, an aminocoumarin family antibiotic that targets bacterial DNA gyrases. The polypeptide is C-methyltransferase NovU (novU) (Streptomyces niveus (Streptomyces spheroides)).